The sequence spans 403 residues: Poly(rC)-binding protein 4 (403 aa).

KH domains are found at residues 17–67 (TLTL…TITG), 101–154 (PVTL…TVSG), and 241–293 (TSSQ…TITG).

The protein localises to the cytoplasm. Functionally, single-stranded nucleic acid binding protein that binds preferentially to oligo dC. The protein is Poly(rC)-binding protein 4 (PCBP4) of Bos taurus (Bovine).